A 2083-amino-acid chain; its full sequence is Non-reducing polyketide synthase curS2 (2083 aa).

The N-terminal acylcarrier protein transacylase domain (SAT) stretch occupies residues Leu-9–His-246. The region spanning Arg-366–Asp-798 is the Ketosynthase family 3 (KS3) domain. Residues Cys-543, His-678, and His-717 each act as for beta-ketoacyl synthase activity in the active site. The malonyl-CoA:ACP transacylase (MAT) domain stretch occupies residues Val-895–Asn-1201. Ser-986 serves as the catalytic For acyl/malonyl transferase activity. Residues Ala-1276–Asp-1415 form an N-terminal hotdog fold region. The PKS/mFAS DH domain occupies Ala-1276–Lys-1585. Residues Ser-1285–Arg-1581 form a product template (PT) domain region. A C-terminal hotdog fold region spans residues Gly-1437 to Lys-1585. One can recognise a Carrier domain in the interval Asp-1637–Lys-1714. Ser-1674 carries the O-(pantetheine 4'-phosphoryl)serine modification. A disordered region spans residues Phe-1710–Ala-1790. Residues Ser-1718–Ser-1736 show a composition bias toward low complexity. Residues Met-1745 to Ser-1754 show a composition bias toward polar residues. A compositionally biased stretch (basic and acidic residues) spans Leu-1771–Glu-1784. Positions Met-1811–Leu-2058 are thioesterase (TE) domain. The active-site For thioesterase activity is His-2065.

It participates in mycotoxin biosynthesis. In terms of biological role, non-reducing polyketide synthase; part of the gene cluster that mediates the biosynthesis of 10,11-dehydrocurvularin, a prevalent fungal phytotoxin with heat shock response and immune-modulatory activities. The highly reducing polyketide synthase curS1 is responsible for biosynthesis up to the tetraketide stage. The non-reducing polyketide synthase curS2 then conducts four additional chain extension cycles, producing the unreduced part of the nascent octaketide from C-1 to C-8 in 10,11-dehydrocurvularin. This chain is Non-reducing polyketide synthase curS2, found in Aspergillus terreus.